The sequence spans 98 residues: NADH-ubiquinone oxidoreductase chain 4L (98 aa).

The next 3 helical transmembrane spans lie at P2–F22, S29–L49, and I61–V81.

It belongs to the complex I subunit 4L family. In terms of assembly, core subunit of respiratory chain NADH dehydrogenase (Complex I) which is composed of 45 different subunits.

The protein resides in the mitochondrion inner membrane. It catalyses the reaction a ubiquinone + NADH + 5 H(+)(in) = a ubiquinol + NAD(+) + 4 H(+)(out). Functionally, core subunit of the mitochondrial membrane respiratory chain NADH dehydrogenase (Complex I) which catalyzes electron transfer from NADH through the respiratory chain, using ubiquinone as an electron acceptor. Part of the enzyme membrane arm which is embedded in the lipid bilayer and involved in proton translocation. This Eulemur mongoz (Mongoose lemur) protein is NADH-ubiquinone oxidoreductase chain 4L (MT-ND4L).